The sequence spans 380 residues: 8-amino-7-oxononanoate synthase (380 aa).

Substrate is bound at residue Arg-26. 104-105 (GY) is a binding site for pyridoxal 5'-phosphate. His-129 provides a ligand contact to substrate. Residues Ser-175, 200 to 203 (DEAH), and 232 to 235 (TLSK) each bind pyridoxal 5'-phosphate. At Lys-235 the chain carries N6-(pyridoxal phosphate)lysine. Thr-345 is a binding site for substrate.

The protein belongs to the class-II pyridoxal-phosphate-dependent aminotransferase family. BioF subfamily. Homodimer. The cofactor is pyridoxal 5'-phosphate.

It catalyses the reaction 6-carboxyhexanoyl-[ACP] + L-alanine + H(+) = (8S)-8-amino-7-oxononanoate + holo-[ACP] + CO2. The protein operates within cofactor biosynthesis; biotin biosynthesis. Its function is as follows. Catalyzes the decarboxylative condensation of pimeloyl-[acyl-carrier protein] and L-alanine to produce 8-amino-7-oxononanoate (AON), [acyl-carrier protein], and carbon dioxide. This Mycolicibacterium gilvum (strain PYR-GCK) (Mycobacterium gilvum (strain PYR-GCK)) protein is 8-amino-7-oxononanoate synthase.